The following is a 208-amino-acid chain: Putative adhesin P1-like protein MPN_468 (208 aa).

2 disordered regions span residues 29–49 (TNGSPAGNTSSTTQSNDVAPT) and 97–172 (DSKT…NLTP). The span at 100 to 132 (TQNNTTTNENHTKFASATGSGQQQGSTTTTSAG) shows a compositional bias: low complexity. The segment covering 145-158 (SGNSISVQEATSGD) has biased composition (polar residues). Residues 159–172 (NLTNYTNLPPNLTP) show a composition bias toward low complexity.

This sequence belongs to the adhesin P1 family.

The polypeptide is Putative adhesin P1-like protein MPN_468 (Mycoplasma pneumoniae (strain ATCC 29342 / M129 / Subtype 1) (Mycoplasmoides pneumoniae)).